A 427-amino-acid polypeptide reads, in one-letter code: Endothelin-1 receptor (427 aa).

The signal sequence occupies residues 1–20 (METFWLRLSFWVALVGGVIS). Residues 21-80 (DNPESYSTNLSIHVDSVATFHGTELSFVVTTHQPTNLALPSNGSMHNYCPQQTKITSAFK) lie on the Extracellular side of the membrane. 2 N-linked (GlcNAc...) asparagine glycosylation sites follow: Asn-29 and Asn-62. Residues 81–102 (YINTVISCTIFIVGMVGNATLL) form a helical membrane-spanning segment. The Cytoplasmic portion of the chain corresponds to 103 to 112 (RIIYQNKCMR). Residues 113–132 (NGPNALIASLALGDLIYVVI) traverse the membrane as a helical segment. Residues 133-159 (DLPINVFKLLAGRWPFEQNDFGVFLCK) lie on the Extracellular side of the membrane. Cys-158 and Cys-239 are oxidised to a cystine. The helical transmembrane segment at 160–181 (LFPFLQKSSVGITVLNLCALSV) threads the bilayer. Residues 182–205 (DRYRAVASWSRVQGIGIPLVTAIE) lie on the Cytoplasmic side of the membrane. A helical transmembrane segment spans residues 206–229 (IVSIWILSFILAIPEAIGFVMVPF). At 230–256 (EYKGAQHRTCMLNATSKFMEFYQDVKD) the chain is on the extracellular side. Residues 257-278 (WWLFGFYFCMPLVCTAIFYTLM) traverse the membrane as a helical segment. Residues 279-306 (TCEMLNRRNGSLRIALSEHLKQRREVAK) are Cytoplasmic-facing. The chain crosses the membrane as a helical span at residues 307 to 328 (TVFCLVVIFALCWFPLHLSRIL). The Extracellular portion of the chain corresponds to 329-347 (KKTVYDEMDTNRCELLSFL). A helical membrane pass occupies residues 348 to 372 (LLMDYIGINLATMNSCINPIALYFV). Residues 373–427 (SKKFKNCFQSCLCCCCYQSKSLMTSVPMNGTSIQWKNHEQNNHNTERSSHKDSIN) are Cytoplasmic-facing. A Phosphoserine modification is found at Ser-425.

Belongs to the G-protein coupled receptor 1 family. Endothelin receptor subfamily. EDNRA sub-subfamily. In terms of assembly, interacts with HDAC7 and KAT5.

It is found in the cell membrane. Receptor for endothelin-1. Mediates its action by association with G proteins that activate a phosphatidylinositol-calcium second messenger system. The rank order of binding affinities for ET-A is: ET1 &gt; ET2 &gt;&gt; ET3. The chain is Endothelin-1 receptor from Bos taurus (Bovine).